The following is a 131-amino-acid chain: uncharacterized protein (131 aa).

The first 16 residues, 1 to 16 (MDVLFVAIFAVPLILG), serve as a signal peptide directing secretion.

Its subcellular location is the secreted. This is an uncharacterized protein from Homo sapiens (Human).